The sequence spans 116 residues: Cysteine-rich venom protein Cau1 (116 aa).

An SCP domain is found at 4–42 (SYAVVGHYTQIVWYKSDRIGCAAAYCPSSVYNYFYVCQY). 5 disulfides stabilise this stretch: cysteine 24-cysteine 40, cysteine 62-cysteine 69, cysteine 65-cysteine 74, cysteine 87-cysteine 105, and cysteine 96-cysteine 109. Positions 78–111 (CRVEDEFINCKDMAESRDCQDNYMMTNCAAFCSC) constitute a ShKT domain.

It belongs to the CRISP family. Expressed by the venom gland.

It localises to the secreted. Its function is as follows. Blocks contraction of smooth muscle elicited by high potassium-induced depolarization, but does not block caffeine-stimulated contraction. May target voltage-gated calcium channels on smooth muscle. This Causus rhombeatus (Rhombic night adder) protein is Cysteine-rich venom protein Cau1.